A 431-amino-acid chain; its full sequence is MANSC domain-containing protein 1 (431 aa).

The N-terminal stretch at 1 to 26 is a signal peptide; sequence MFFGGEGSLTYTLVIICFLTLRLSAS. At 27 to 385 the chain is on the extracellular side; that stretch reads QNCLKKSLED…QYGLPFEKWL (359 aa). An MANSC domain is found at 33–117; that stretch reads SLEDVVIDIQ…LKPAKGLMSY (85 aa). Asn72, Asn222, and Asn251 each carry an N-linked (GlcNAc...) asparagine glycan. The segment at 234-277 is disordered; the sequence is SPHTTSATPKPATLLPTNASVTPSGTSQPQLATTAPPVTTVTSQ. Polar residues predominate over residues 248–261; it reads LPTNASVTPSGTSQ. The segment covering 262–277 has biased composition (low complexity); it reads PQLATTAPPVTTVTSQ. N-linked (GlcNAc...) asparagine glycans are attached at residues Asn327 and Asn352. The tract at residues 352–372 is disordered; the sequence is NKTASWEGREASPGSSSQGSV. The helical transmembrane segment at 386–408 threads the bilayer; that stretch reads LIGSLLFGVLFLVIGLVLLGRIL. Over 409–431 the chain is Cytoplasmic; that stretch reads SESLRRKRYSRLDYLINGIYVDI.

Widely expressed.

The protein localises to the membrane. This Homo sapiens (Human) protein is MANSC domain-containing protein 1 (MANSC1).